Consider the following 314-residue polypeptide: Acetaldehyde dehydrogenase 1/2 (314 aa).

12–15 is a binding site for NAD(+); that stretch reads SGNI. Cysteine 130 serves as the catalytic Acyl-thioester intermediate. Residues 161–169 and asparagine 288 contribute to the NAD(+) site; that span reads SAGPGTRAN.

The protein belongs to the acetaldehyde dehydrogenase family.

It carries out the reaction acetaldehyde + NAD(+) + CoA = acetyl-CoA + NADH + H(+). This chain is Acetaldehyde dehydrogenase 1/2, found in Rhizorhabdus wittichii (strain DSM 6014 / CCUG 31198 / JCM 15750 / NBRC 105917 / EY 4224 / RW1) (Sphingomonas wittichii).